Consider the following 233-residue polypeptide: Probable O-methyltransferase Rv1703c (233 aa).

S-adenosyl-L-methionine contacts are provided by residues Val55, Glu77, 79 to 80 (GT), and Glu102. Residue Asp157 coordinates a divalent metal cation. An S-adenosyl-L-methionine-binding site is contributed by Asp159. Positions 185 and 186 each coordinate a divalent metal cation.

The protein belongs to the class I-like SAM-binding methyltransferase superfamily. Cation-dependent O-methyltransferase family.

In terms of biological role, specifically methylates an O atom of its substrate. The sequence is that of Probable O-methyltransferase Rv1703c from Mycobacterium tuberculosis (strain ATCC 25618 / H37Rv).